A 460-amino-acid chain; its full sequence is Argininosuccinate lyase (460 aa).

Belongs to the lyase 1 family. Argininosuccinate lyase subfamily.

It is found in the cytoplasm. The enzyme catalyses 2-(N(omega)-L-arginino)succinate = fumarate + L-arginine. It participates in amino-acid biosynthesis; L-arginine biosynthesis; L-arginine from L-ornithine and carbamoyl phosphate: step 3/3. The protein is Argininosuccinate lyase of Solibacter usitatus (strain Ellin6076).